Here is a 201-residue protein sequence, read N- to C-terminus: 3-isopropylmalate dehydratase small subunit (201 aa).

The protein belongs to the LeuD family. LeuD type 1 subfamily. As to quaternary structure, heterodimer of LeuC and LeuD.

It catalyses the reaction (2R,3S)-3-isopropylmalate = (2S)-2-isopropylmalate. It participates in amino-acid biosynthesis; L-leucine biosynthesis; L-leucine from 3-methyl-2-oxobutanoate: step 2/4. Catalyzes the isomerization between 2-isopropylmalate and 3-isopropylmalate, via the formation of 2-isopropylmaleate. The sequence is that of 3-isopropylmalate dehydratase small subunit from Azorhizobium caulinodans (strain ATCC 43989 / DSM 5975 / JCM 20966 / LMG 6465 / NBRC 14845 / NCIMB 13405 / ORS 571).